The primary structure comprises 140 residues: Nucleoside diphosphate kinase (140 aa).

Residues lysine 11, phenylalanine 59, arginine 87, threonine 93, arginine 104, and asparagine 114 each coordinate ATP. Histidine 117 acts as the Pros-phosphohistidine intermediate in catalysis.

This sequence belongs to the NDK family. As to quaternary structure, homotetramer. It depends on Mg(2+) as a cofactor.

The protein localises to the cytoplasm. It carries out the reaction a 2'-deoxyribonucleoside 5'-diphosphate + ATP = a 2'-deoxyribonucleoside 5'-triphosphate + ADP. It catalyses the reaction a ribonucleoside 5'-diphosphate + ATP = a ribonucleoside 5'-triphosphate + ADP. Major role in the synthesis of nucleoside triphosphates other than ATP. The ATP gamma phosphate is transferred to the NDP beta phosphate via a ping-pong mechanism, using a phosphorylated active-site intermediate. The polypeptide is Nucleoside diphosphate kinase (Xanthobacter autotrophicus (strain ATCC BAA-1158 / Py2)).